Reading from the N-terminus, the 99-residue chain is UPF0729 protein CG18508 (99 aa).

The segment at 60–99 is disordered; it reads PGGKKTENVSDDDAEESENPPLNATAMAAETEVDESKKEI. Over residues 68 to 77 the composition is skewed to acidic residues; that stretch reads VSDDDAEESE. Residue Ser-69 is modified to Phosphoserine.

It belongs to the UPF0729 family.

In Drosophila melanogaster (Fruit fly), this protein is UPF0729 protein CG18508.